The chain runs to 86 residues: Large ribosomal subunit protein bL31 (86 aa).

The tract at residues 66–86 is disordered; it reads GMGSADSATSQETKEAKESDK. Over residues 77–86 the composition is skewed to basic and acidic residues; it reads ETKEAKESDK.

This sequence belongs to the bacterial ribosomal protein bL31 family. Type A subfamily. Part of the 50S ribosomal subunit.

Functionally, binds the 23S rRNA. This Prochlorococcus marinus (strain MIT 9515) protein is Large ribosomal subunit protein bL31.